The primary structure comprises 397 residues: 2-deoxy-scyllo-inosose synthase (397 aa).

NAD(+) is bound by residues Asp-41, 71-74, 103-107, 127-128, 138-140, and 149-150; these read EPYK, GVIGN, TS, SLK, and KN. The active site involves Lys-140. Glu-182 contacts Co(2+). Residue Glu-242 is part of the active site. His-245 and His-261 together coordinate Co(2+).

Belongs to the sugar phosphate cyclases superfamily. DOI synthase family. It depends on NAD(+) as a cofactor. Requires Co(2+) as cofactor.

It carries out the reaction D-glucose 6-phosphate = 2-deoxy-L-scyllo-inosose + phosphate. It participates in metabolic intermediate biosynthesis; 2-deoxystreptamine biosynthesis; 2-deoxystreptamine from D-glucose 6-phosphate: step 1/4. Its pathway is antibiotic biosynthesis; gentamicin biosynthesis. Its function is as follows. Catalyzes the intramolecular carbocycle formation from D-glucose-6-phosphate to 2-deoxy-scyllo-inosose (DOI). This is 2-deoxy-scyllo-inosose synthase (gtmA) from Micromonospora echinospora (Micromonospora purpurea).